The following is a 433-amino-acid chain: Alpha-(1,3)-fucosyltransferase 4 (433 aa).

At 1–52 the chain is on the cytoplasmic side; that stretch reads MAPARQELQHESRCRPSRTVDAWRAAVATRGRHMETPGYRRRTRCGGWGLPR. Residues 53–74 traverse the membrane as a helical; Signal-anchor for type II membrane protein segment; the sequence is SVSSLAAVGLLCTALTTFICWG. Topologically, residues 75–433 are lumenal; that stretch reads QLPPLPWASP…IHNLADWFQR (359 aa). N-linked (GlcNAc...) asparagine glycosylation is found at Asn-117 and Asn-218.

This sequence belongs to the glycosyltransferase 10 family. As to expression, highest expression in stomach and colon. It is also expressed in the lung, testis, uterus, small intestine and to a lesser extent in spleen, and ovary. Present in trace amounts in brain, thymus, heart, smooth muscle, kidney and bone marrow. Not found in liver, salivary gland and pancreas.

It localises to the golgi apparatus. It is found in the golgi stack membrane. The catalysed reaction is a beta-D-galactosyl-(1-&gt;4)-N-acetyl-beta-D-glucosaminyl derivative + GDP-beta-L-fucose = a beta-D-galactosyl-(1-&gt;4)-[alpha-L-fucosyl-(1-&gt;3)]-N-acetyl-beta-D-glucosaminyl derivative + GDP + H(+). The enzyme catalyses an N-acetyl-alpha-neuraminyl-(2-&gt;3)-beta-D-galactosyl-(1-&gt;4)-N-acetyl-beta-D-glucosaminyl derivative + GDP-beta-L-fucose = an alpha-Neu5Ac-(2-&gt;3)-beta-D-Gal-(1-&gt;4)-[alpha-L-Fuc-(1-&gt;3)]-beta-D-GlcNAc derivative + GDP + H(+). It catalyses the reaction an alpha-Neu5Ac-(2-&gt;3)-beta-D-Gal-(1-&gt;4)-beta-D-GlcNAc-(1-&gt;3)-beta-D-Gal-(1-&gt;4)-beta-D-GlcNAc derivative + GDP-beta-L-fucose = an alpha-Neu5Ac-(2-&gt;3)-beta-D-Gal-(1-&gt;4)-beta-D-GlcNAc-(1-&gt;3)-beta-D-Gal-(1-&gt;4)-[alpha-L-Fuc-(1-&gt;3)]-beta-D-GlcNAc derivative + GDP + H(+). It carries out the reaction an alpha-Neu5Ac-(2-&gt;3)-beta-D-Gal-(1-&gt;4)-beta-D-GlcNAc6S derivative + GDP-beta-L-fucose = an alpha-Neu5Ac-(2-&gt;3)-beta-D-Gal-(1-&gt;4)-[alpha-L-Fuc-(1-&gt;3)]-beta-D-GlcNAc6S derivative + GDP + H(+). Its pathway is protein modification; protein glycosylation. Functionally, catalyzes alpha(1-&gt;3) linkage of fucosyl moiety transferred from GDP-beta-L-fucose to N-acetyl glucosamine (GlcNAc) within type 2 lactosamine (LacNAc, Gal-beta(1-&gt;4)GlcNAc) glycan attached to N- or O-linked glycoproteins. Robustly fucosylates nonsialylated distal LacNAc unit of the polylactosamine chain to form Lewis X antigen (CD15), a glycan determinant known to mediate important cellular functions in development and immunity. Fucosylates with lower efficiency sialylated LacNAc acceptors to form sialyl Lewis X and 6-sulfo sialyl Lewis X determinants that serve as recognition epitopes for C-type lectins. Together with FUT7 contributes to SELE, SELL and SELP selectin ligand biosynthesis and selectin-dependent lymphocyte homing, leukocyte migration and blood leukocyte homeostasis. In a cell type specific manner, may also fucosylate the internal LacNAc unit of the polylactosamine chain to form VIM-2 antigen that serves as recognition epitope for SELE. This chain is Alpha-(1,3)-fucosyltransferase 4 (Fut4), found in Mus musculus (Mouse).